A 503-amino-acid chain; its full sequence is Inosine-5'-monophosphate dehydrogenase (503 aa).

The K(+) site is built by G20 and S22. CBS domains are found at residues 103-163 and 167-228; these read FVVS…ETKV and MTPF…LVDS. Position 261 to 263 (261 to 263) interacts with NAD(+); that stretch reads DSS. Positions 264, 266, 314, and 316 each coordinate K(+). Residue 312-314 coordinates NAD(+); the sequence is GIG. Position 317 (S317) interacts with IMP. C319 lines the K(+) pocket. The Thioimidate intermediate role is filled by C319. Residues 358–360, 381–382, and 405–409 each bind IMP; these read DGG, GR, and YWGEG. The Proton acceptor role is filled by R418. E431 is a binding site for IMP. Residues N460, E485, G486, and G487 each contribute to the K(+) site.

Belongs to the IMPDH/GMPR family. In terms of assembly, homotetramer. The cofactor is K(+).

Its subcellular location is the cytoplasm. It catalyses the reaction IMP + NAD(+) + H2O = XMP + NADH + H(+). Its pathway is purine metabolism; XMP biosynthesis via de novo pathway; XMP from IMP: step 1/1. With respect to regulation, mycophenolic acid (MPA) is a non-competitive inhibitor that prevents formation of the closed enzyme conformation by binding to the same site as the amobile flap. In contrast, mizoribine monophosphate (MZP) is a competitive inhibitor that induces the closed conformation. MPA is a potent inhibitor of mammalian IMPDHs but a poor inhibitor of the bacterial enzymes. MZP is a more potent inhibitor of bacterial IMPDH. In terms of biological role, catalyzes the conversion of inosine 5'-phosphate (IMP) to xanthosine 5'-phosphate (XMP), the first committed and rate-limiting step in the de novo synthesis of guanine nucleotides, and therefore plays an important role in the regulation of cell growth. Could also have a single-stranded nucleic acid-binding activity and could play a role in RNA and/or DNA metabolism. This chain is Inosine-5'-monophosphate dehydrogenase, found in Tritrichomonas foetus (Trichomonas foetus).